We begin with the raw amino-acid sequence, 218 residues long: MEPGFWHEKWYKQQIGFHQQDINPFLVQYWQRLALPAGAKVFVPLCGKSLDMCFLAEQGHQVIGCELNELAVQQFFSDNQLEMTQTVEGEHQHYQTEQVSLYQGDIFTLPKRITQDVTAFYDRAALIAWPEEMRAQYAKQLANLLPSGSLGLLVTLDYPQETLNGPPFAVSPNWIEAHLTDDFEIQALACQDVLADNPRFVKKEVPWLNEAAYLLKRK.

Trp10, Leu45, Glu66, and Arg123 together coordinate S-adenosyl-L-methionine.

The protein belongs to the class I-like SAM-binding methyltransferase superfamily. TPMT family.

The protein localises to the cytoplasm. It catalyses the reaction S-adenosyl-L-methionine + a thiopurine = S-adenosyl-L-homocysteine + a thiopurine S-methylether.. The protein is Thiopurine S-methyltransferase of Shewanella sp. (strain W3-18-1).